We begin with the raw amino-acid sequence, 382 residues long: MWIENLPNGKYKYFERYRDPLTEKLKKVSVTLDKKTPRAQKVAQAELLEKIESKINNSSTSNAKFTDIAEEWWSFYKKSIKQSSISALQSSFNFIIDYFDKEIKISNVTSKVIQKFINDADCPRSKLERSKSTLNLIFDYAVDLEYIEYNPARKAKLPKKIQTVKDLEKIQNKYLEQNELKALLSELYSRPNTRRLALLAEFMSLNGCRMGEAIALKKENYKRSERKIDIHGTLDKTVGYSKGVKTTPKTASSFRTVDLSDREIEILDEIIEQNNLSKSVINDYNEMGYIFVSKRGIPLQTNSFNLAIKRANSRLKSPINKNLSSHIFRHTLISYLAENNVPLKAIVDRVGHKDGGKTTTAIYTHVTENMKSSIIDILNKKN.

A Core-binding (CB) domain is found at 63–142 (AKFTDIAEEW…TLNLIFDYAV (80 aa)). In terms of domain architecture, Tyr recombinase spans 170–376 (IQNKYLEQNE…TENMKSSIID (207 aa)). Residues R209, K242, H326, R329, and H352 contribute to the active site. Catalysis depends on Y363, which acts as the O-(3'-phospho-DNA)-tyrosine intermediate.

The protein belongs to the 'phage' integrase family.

This chain is Prophage ps2 probable integrase (ps201), found in Lactococcus lactis subsp. lactis (strain IL1403) (Streptococcus lactis).